The chain runs to 378 residues: Chaperone protein DnaJ (378 aa).

In terms of domain architecture, J spans 5-70 (DYYEVLGLQK…EKRAMYDQYG (66 aa)). The CR-type zinc-finger motif lies at 135 to 213 (GVKKDIRIRT…CHGDGRVEKT (79 aa)). C148, C151, C165, C168, C187, C190, C201, and C204 together coordinate Zn(2+). 4 CXXCXGXG motif repeats span residues 148–155 (CDTCHGSG), 165–172 (CPHCHGSG), 187–194 (CPSCHGTG), and 201–208 (CKSCHGDG).

This sequence belongs to the DnaJ family. In terms of assembly, homodimer. The cofactor is Zn(2+).

The protein localises to the cytoplasm. Participates actively in the response to hyperosmotic and heat shock by preventing the aggregation of stress-denatured proteins and by disaggregating proteins, also in an autonomous, DnaK-independent fashion. Unfolded proteins bind initially to DnaJ; upon interaction with the DnaJ-bound protein, DnaK hydrolyzes its bound ATP, resulting in the formation of a stable complex. GrpE releases ADP from DnaK; ATP binding to DnaK triggers the release of the substrate protein, thus completing the reaction cycle. Several rounds of ATP-dependent interactions between DnaJ, DnaK and GrpE are required for fully efficient folding. Also involved, together with DnaK and GrpE, in the DNA replication of plasmids through activation of initiation proteins. The sequence is that of Chaperone protein DnaJ from Glaesserella parasuis serovar 5 (strain SH0165) (Haemophilus parasuis).